The primary structure comprises 1192 residues: ATP-dependent helicase/deoxyribonuclease subunit B (1192 aa).

It belongs to the helicase family. AddB/RexB type 2 subfamily. As to quaternary structure, heterodimer of AddA and RexB. Requires Mg(2+) as cofactor.

Functionally, the heterodimer acts as both an ATP-dependent DNA helicase and an ATP-dependent, dual-direction single-stranded exonuclease. Recognizes the chi site generating a DNA molecule suitable for the initiation of homologous recombination. This subunit has 5' -&gt; 3' nuclease activity but not helicase activity. In Pediococcus pentosaceus (strain ATCC 25745 / CCUG 21536 / LMG 10740 / 183-1w), this protein is ATP-dependent helicase/deoxyribonuclease subunit B.